The primary structure comprises 155 residues: uncharacterized protein (155 aa).

A signal peptide spans 1–30 (MTYNTNTSLSSYAGLSAFALSVFCILWGTA).

This is an uncharacterized protein from Treponema pallidum (strain Nichols).